The sequence spans 935 residues: Coatomer subunit gamma (935 aa).

5 HEAT repeats span residues 258–296 (PQLF…RNSR), 337–372 (PEKI…TGTS), 373–410 (KNIS…NFPQ), 412–449 (WKSI…FVPQ), and 524–562 (PTLY…ARNK). The segment at 630–656 (KSETTLDTTPEAESVPEKRADANSFAG) is disordered. T638 carries the phosphothreonine modification. Residue S643 is modified to Phosphoserine. K647 participates in a covalent cross-link: Glycyl lysine isopeptide (Lys-Gly) (interchain with G-Cter in ubiquitin). Position 653 is a phosphoserine (S653).

It belongs to the COPG family. Oligomeric complex that consists of at least the alpha, beta, beta', gamma, delta, epsilon and zeta subunits. Interacts (via C-terminus) with GEA1 (via N-terminal region) and KEI1 (via C-terminal region).

The protein localises to the cytoplasm. It is found in the golgi apparatus membrane. The protein resides in the cytoplasmic vesicle. Its subcellular location is the COPI-coated vesicle membrane. It localises to the endosome. In terms of biological role, the coatomer is a cytosolic protein complex that binds to dilysine motifs and reversibly associates with Golgi non-clathrin-coated vesicles, which further mediate biosynthetic protein transport from the ER, via the Golgi up to the trans Golgi network. Coatomer complex is required for budding from Golgi membranes, and is essential for the retrograde Golgi-to-ER transport of dilysine-tagged proteins. This is Coatomer subunit gamma (SEC21) from Saccharomyces cerevisiae (strain ATCC 204508 / S288c) (Baker's yeast).